The following is a 453-amino-acid chain: Presenilin-like protein At1g08700 (453 aa).

The Cytoplasmic segment spans residues 1-8 (MESSILDS). The chain crosses the membrane as a helical span at residues 9–29 (LGVEIIGVMAPVSICMFLVVL). The Lumenal segment spans residues 30–68 (LTYSLSVTSDPQIRSAANLIYIENPSDSTTVKLEGSLAN). Residues 69–89 (AIVFVVLIAAVTFILVLLFYY) traverse the membrane as a helical segment. The Cytoplasmic segment spans residues 90-103 (NFTNFLKHYMRFSA). A helical transmembrane segment spans residues 104–124 (FFVLGTMGGAIFLSIIQHFSI). The Lumenal portion of the chain corresponds to 125 to 132 (PVDSITCF). Residues 133–153 (ILLFNFTILGTLSVFAGGIPI) form a helical membrane-spanning segment. The Cytoplasmic portion of the chain corresponds to 154-159 (VLRQCY). 2 consecutive transmembrane segments (helical) span residues 160–180 (MVVM…WTTW) and 181–201 (FILV…GGPL). Residue Asp190 is part of the active site. The Cytoplasmic segment spans residues 202–369 (KLLVELASSR…VVDISNRGIK (168 aa)). Disordered regions lie at residues 226-248 (VSSG…GGGV) and 292-329 (IGNG…DRES). Positions 227-240 (SSGNQRRNRGSSLR) are enriched in low complexity. Ser296 carries the phosphoserine modification. Over residues 309-320 (PSASEHSTSVGT) the composition is skewed to polar residues. A helical transmembrane segment spans residues 370 to 390 (LGLGDFIFYSVLVGRAAMYDL). Residue Asp374 is part of the active site. Topologically, residues 391 to 392 (MT) are lumenal. A helical transmembrane segment spans residues 393–413 (VYACYLAIISGLGCTLILLSV). At 414 to 417 (YNRA) the chain is on the cytoplasmic side. An intramembrane region (helical) is located at residues 418-438 (LPALPISIMLGVVFYFLTRLL). Residues 419 to 421 (PAL) carry the PAL motif. Topologically, residues 439 to 453 (MEPFVVGVTTNLMMF) are cytoplasmic.

The protein belongs to the peptidase A22A family. In terms of assembly, homodimer. Probable component of the gamma-secretase complex, a complex composed of a presenilin homodimer, nicastrin, APH1 and PEN2.

It localises to the endoplasmic reticulum membrane. Its subcellular location is the golgi apparatus membrane. Functionally, probable subunit of the gamma-secretase complex, an endoprotease complex that catalyzes the intramembrane cleavage of integral membrane proteins such as Notch receptors. This chain is Presenilin-like protein At1g08700, found in Arabidopsis thaliana (Mouse-ear cress).